Here is a 482-residue protein sequence, read N- to C-terminus: Glutamyl-tRNA(Gln) amidotransferase subunit A (482 aa).

Residues Lys75 and Ser150 each act as charge relay system in the active site. Ser174 serves as the catalytic Acyl-ester intermediate.

This sequence belongs to the amidase family. GatA subfamily. As to quaternary structure, heterotrimer of A, B and C subunits.

It carries out the reaction L-glutamyl-tRNA(Gln) + L-glutamine + ATP + H2O = L-glutaminyl-tRNA(Gln) + L-glutamate + ADP + phosphate + H(+). Functionally, allows the formation of correctly charged Gln-tRNA(Gln) through the transamidation of misacylated Glu-tRNA(Gln) in organisms which lack glutaminyl-tRNA synthetase. The reaction takes place in the presence of glutamine and ATP through an activated gamma-phospho-Glu-tRNA(Gln). The protein is Glutamyl-tRNA(Gln) amidotransferase subunit A of Rippkaea orientalis (strain PCC 8801 / RF-1) (Cyanothece sp. (strain PCC 8801)).